Here is an 82-residue protein sequence, read N- to C-terminus: Quinohemoprotein amine dehydrogenase subunit gamma (82 aa).

The 4-cysteinyl-glutamic acid (Cys-Glu) cross-link spans 7 to 16 (CTTSFDPGWE). 2 cross-links (3-cysteinyl-aspartic acid (Cys-Asp)) span residues 27-33 (CQPMEAD) and 41-49 (CWWPAQVAD). The Proton acceptor role is filled by D33. The segment at residues 37–43 (CADPCWW) is a cross-link (4'-cysteinyl-tryptophylquinone (Cys-Trp)). Residue W43 is modified to Tryptophylquinone.

Belongs to the quinohemoprotein amine dehydrogenase subunit gamma family. Heterotrimer of an alpha, a beta and a gamma subunit. It depends on cysteine tryptophylquinone residue as a cofactor. In terms of processing, the cysteine tryptophylquinone (CTQ) is generated by oxidation of the indole ring of a tryptophan residue to form tryptophylquinone, followed by covalent cross-linking with a cysteine residue.

It is found in the periplasm. It carries out the reaction 2 Fe(III)-[cytochrome c550] + an aliphatic amine + H2O = 2 Fe(II)-[cytochrome c550] + an aldehyde + NH4(+) + 2 H(+). Its activity is regulated as follows. Inhibited by carbonyl reagents such as hydrazine, hydroxylamine, phenylhydrazine and semicarbazide. Catalyzes the oxidative deamination of a wide range of primary aliphatic and aromatic amines. The physiological electron acceptor is the constitutive cytochrome c550. The protein is Quinohemoprotein amine dehydrogenase subunit gamma (qhnDH) of Paracoccus denitrificans.